The primary structure comprises 205 residues: Max-like protein homolog 2 (205 aa).

Low complexity-rich tracts occupy residues 1-12 (MSRSRSAAASSS) and 26-40 (SASSPSAPNTPATNS). The disordered stretch occupies residues 1–58 (MSRSRSAAASSSQKPDDMDLMSPDGSASSPSAPNTPATNSGGFSSDRKKATHLRCERQ). Over residues 45–58 (SDRKKATHLRCERQ) the composition is skewed to basic and acidic residues. The tract at residues 47–60 (RKKATHLRCERQRR) is basic motif. The region spanning 47–101 (RKKATHLRCERQRREAINSGYSDLKDLIPQTTTSLGCKTTNAAILFRACDFMSQL) is the bHLH domain. Residues 61–101 (EAINSGYSDLKDLIPQTTTSLGCKTTNAAILFRACDFMSQL) are helix-loop-helix motif. Residues 98–132 (MSQLKTDISDADKQLAQLNAQAAALEMIASEYEQM) adopt a coiled-coil conformation.

Widely expressed.

It is found in the nucleus. It localises to the cytoplasm. The protein localises to the mitochondrion. In terms of biological role, transcription factor. Binds to the E box motif 5'-CACGTG-3', probably in a heterodimeric complex with mml-1. Involved in modulating longevity in response to TOR signaling, dietary restriction, the decline in protein homeostasis associated with normal aging, germline signaling and the insulin-like signaling pathway. Plays a role in autophagy. Involved in regulating migration of the ray 1 precursor cells in the male tail, acting in concert with Wnt and semaphorin signaling pathways. Regulates transcription of genes encoding extracellular matrix (ECM) components which may contribute to the substratum required for migration of the neighboring ray 1 precursor cells. Required for resistance to oxidative stress. Involved in promoting infection by the microsporidian pathogen N.parisii, probably acting independently of its canonical partner, mml-1. The polypeptide is Max-like protein homolog 2 (Caenorhabditis elegans).